A 315-amino-acid chain; its full sequence is Uracil-DNA glycosylase (315 aa).

A compositionally biased stretch (low complexity) spans 35 to 80; the sequence is AAAAAPAGAGAGASKPARPPAAARPAKGTPAASAATTATGADASAP. A disordered region spans residues 35–88; that stretch reads AAAAAPAGAGAGASKPARPPAAARPAKGTPAASAATTATGADASAPAPDPGAPT. The active-site Proton acceptor is Asp158.

The protein belongs to the uracil-DNA glycosylase (UDG) superfamily. UNG family.

It localises to the host nucleus. The enzyme catalyses Hydrolyzes single-stranded DNA or mismatched double-stranded DNA and polynucleotides, releasing free uracil.. Functionally, excises uracil residues from the DNA which can arise as a result of misincorporation of dUMP residues by DNA polymerase or deamination of cytosines. Therefore may reduce deleterious uracil incorporation into the viral genome, particularly in terminally differentiated cells which lack DNA repair enzymes. In Suid herpesvirus 1 (strain Indiana-Funkhauser / Becker) (SuHV-1), this protein is Uracil-DNA glycosylase (UL2).